Reading from the N-terminus, the 906-residue chain is Cadherin-2A (906 aa).

The signal sequence occupies residues 1–28; the sequence is MCRKEPFLLPTALCILAALVLHQGPVEA. Residues 29–160 constitute a propeptide that is removed on maturation; that stretch reads LGGSRLCKTG…KHNGLQRQKR (132 aa). Cadherin domains lie at 161-268, 269-383, 384-498, 499-604, and 605-714; these read DWVI…RPEF, LHQI…PPEF, TAMT…NPYF, TPNP…DNAP, and YVYP…TTAP. Topologically, residues 161 to 724 are extracellular; sequence DWVIPPINVP…IIGTGLGTGA (564 aa). Ca(2+) contacts are provided by Glu-171, Asp-227, Glu-229, Asp-260, Met-261, Asn-262, Asp-263, and Asn-264. The N-linked (GlcNAc...) asparagine glycan is linked to Asn-274. Residues Asp-294, Asp-296, and Asn-302 each contribute to the Ca(2+) site. A glycan (N-linked (GlcNAc...) asparagine) is linked at Asn-326. Asp-354 contributes to the Ca(2+) binding site. N-linked (GlcNAc...) asparagine glycans are attached at residues Asn-403, Asn-573, Asn-623, Asn-652, and Asn-693. Residues 725 to 746 form a helical membrane-spanning segment; it reads IIAILLCIIILLTLVLMFVVWM. Over 747–906 the chain is Cytoplasmic; that stretch reads KRRDKERQAK…LADMYGGSDD (160 aa). Disordered stretches follow at residues 775 to 800 and 863 to 884; these read EEGGGEEDQDYDLSQLQQPDTVEPDT and SGSTAGSLSSLNSSSSGGEQDY. The span at 776 to 785 shows a compositional bias: acidic residues; that stretch reads EGGGEEDQDY. Residues 863-880 show a composition bias toward low complexity; sequence SGSTAGSLSSLNSSSSGG.

Homodimer (via extracellular region). Can also form heterodimers with other cadherins (via extracellular region). Dimerization occurs in trans, i.e. with a cadherin chain from another cell.

It is found in the cell membrane. It localises to the sarcolemma. Its subcellular location is the cell junction. The protein localises to the cell surface. The protein resides in the desmosome. It is found in the adherens junction. Its function is as follows. Calcium-dependent cell adhesion protein; preferentially mediates homotypic cell-cell adhesion. Cadherins may thus contribute to the sorting of heterogeneous cell types, and thereby play an important role during embryonic development. Required for proper neurite branching. Required for pre- and postsynaptic organization. This chain is Cadherin-2A (cdh2-a), found in Xenopus laevis (African clawed frog).